The chain runs to 246 residues: Trypsin V-B (246 aa).

The first 15 residues, 1–15 (MKICIFFTLLGTVAA), serve as a signal peptide directing secretion. The propeptide at 16–24 (FPTEDNDDR) is activation peptide. The Peptidase S1 domain maps to 25-244 (IVGGYTCQEH…YLNWIQQTVA (220 aa)). Disulfide bonds link C31–C160, C49–C65, C133–C233, C140–C206, C171–C185, and C196–C220. The active-site Charge relay system is H64. Residues E76, N78, and E86 each contribute to the Ca(2+) site. Catalysis depends on D108, which acts as the Charge relay system. S200 serves as the catalytic Charge relay system.

Belongs to the peptidase S1 family. It depends on Ca(2+) as a cofactor.

The protein resides in the secreted. The protein localises to the extracellular space. It carries out the reaction Preferential cleavage: Arg-|-Xaa, Lys-|-Xaa.. The sequence is that of Trypsin V-B from Rattus norvegicus (Rat).